A 149-amino-acid chain; its full sequence is Protein K7 (149 aa).

The protein belongs to the orthopoxvirus OPG044 family. As to quaternary structure, interacts with DDX3; this interaction inhibits DDX3 and suppresses DDX3-mediated IFN-beta promoter induction. Interacts with TRAF6 and IRAK2; these interactions suppress TLR-dependent NF-KappaB activation.

It is found in the host cytoplasm. Functionally, virulence factor that affects the acute immune response to infection. Bcl-2-like protein which, through its interaction with the DEAD box RNA helicase DDX3X/DDX3, prevents TBK1/IKKepsilon-mediated IRF3 activation. Contributes to virulence by binding to the host TRAF6 and IRAK2 and preventing host NF-kappa-B activation. This Cynomys gunnisoni (Gunnison's prairie dog) protein is Protein K7 (OPG044).